Reading from the N-terminus, the 485-residue chain is NADH-quinone oxidoreductase subunit N (485 aa).

A run of 14 helical transmembrane segments spans residues 8–28 (LIAL…MLSI), 35–55 (FLNA…LWFV), 71–91 (GFAM…CTFA), 105–125 (FYLL…ANHL), 127–147 (SLFL…GYAF), 159–179 (YTIL…LVYA), 203–223 (LLAG…LVPF), 235–255 (PAPV…GVVM), 271–291 (VVLA…ALSQ), 297–317 (LLGY…IALQ), 326–346 (VGVY…VVSL), 373–393 (AAVM…LGFI), 408–430 (WWLV…RVAV), and 455–475 (IVVL…QPLI).

This sequence belongs to the complex I subunit 2 family. NDH-1 is composed of 13 different subunits. Subunits NuoA, H, J, K, L, M, N constitute the membrane sector of the complex.

It localises to the cell inner membrane. The enzyme catalyses a quinone + NADH + 5 H(+)(in) = a quinol + NAD(+) + 4 H(+)(out). Its function is as follows. NDH-1 shuttles electrons from NADH, via FMN and iron-sulfur (Fe-S) centers, to quinones in the respiratory chain. The immediate electron acceptor for the enzyme in this species is believed to be ubiquinone. Couples the redox reaction to proton translocation (for every two electrons transferred, four hydrogen ions are translocated across the cytoplasmic membrane), and thus conserves the redox energy in a proton gradient. The sequence is that of NADH-quinone oxidoreductase subunit N from Escherichia coli O6:K15:H31 (strain 536 / UPEC).